Reading from the N-terminus, the 116-residue chain is Type IV narrow pilus major component PilA5 (116 aa).

The propeptide at methionine 1–glycine 5 is leader sequence. Phenylalanine 6 is modified (N-methylphenylalanine). Residues phenylalanine 6–valine 26 form a helical membrane-spanning segment.

In terms of processing, glycosylated.

It localises to the cell inner membrane. Its subcellular location is the cell outer membrane. The protein resides in the periplasm. In terms of biological role, plays an essential role in forming the main structure of the narrow T4P pili that participates in twitching motility. This Thermus thermophilus (strain ATCC BAA-163 / DSM 7039 / HB27) protein is Type IV narrow pilus major component PilA5 (pilA5).